Here is a 401-residue protein sequence, read N- to C-terminus: S-adenosylmethionine synthase (401 aa).

His-15 contributes to the ATP binding site. Asp-17 contacts Mg(2+). Glu-48 lines the K(+) pocket. Glu-61 and Gln-104 together coordinate L-methionine. A flexible loop region spans residues 104 to 114 (QSPDIALGVDR). Residues 179-181 (DGK), 246-247 (RF), Asp-255, 261-262 (RK), Ala-278, and Lys-282 contribute to the ATP site. Residue Asp-255 coordinates L-methionine. Residue Lys-286 coordinates L-methionine.

This sequence belongs to the AdoMet synthase family. As to quaternary structure, homotetramer; dimer of dimers. The cofactor is Mg(2+). Requires K(+) as cofactor.

The protein resides in the cytoplasm. The enzyme catalyses L-methionine + ATP + H2O = S-adenosyl-L-methionine + phosphate + diphosphate. It participates in amino-acid biosynthesis; S-adenosyl-L-methionine biosynthesis; S-adenosyl-L-methionine from L-methionine: step 1/1. Catalyzes the formation of S-adenosylmethionine (AdoMet) from methionine and ATP. The overall synthetic reaction is composed of two sequential steps, AdoMet formation and the subsequent tripolyphosphate hydrolysis which occurs prior to release of AdoMet from the enzyme. The protein is S-adenosylmethionine synthase of Petrotoga mobilis (strain DSM 10674 / SJ95).